The primary structure comprises 299 residues: 4-hydroxybenzoate octaprenyltransferase (299 aa).

The next 7 helical transmembrane spans lie at 34 to 54, 57 to 77, 108 to 128, 163 to 183, 221 to 241, 245 to 265, and 277 to 297; these read IGSLLLLWPTWWALWLAADGL, LWTLFVFTAGVWLTRSAGCVI, LWVFVVLMLVAFALVFTLNWL, WGIPMAFAAVQGSVPVLGWLL, FDLVAQGILYALMFAVLALVD, DLGAAYWAGLGVAALLVAYEF, and FRAFLHNNWVGLAIFVGIAVA.

Belongs to the UbiA prenyltransferase family. Requires Mg(2+) as cofactor.

The protein localises to the cell inner membrane. It carries out the reaction all-trans-octaprenyl diphosphate + 4-hydroxybenzoate = 4-hydroxy-3-(all-trans-octaprenyl)benzoate + diphosphate. The protein operates within cofactor biosynthesis; ubiquinone biosynthesis. Catalyzes the prenylation of para-hydroxybenzoate (PHB) with an all-trans polyprenyl group. Mediates the second step in the final reaction sequence of ubiquinone-8 (UQ-8) biosynthesis, which is the condensation of the polyisoprenoid side chain with PHB, generating the first membrane-bound Q intermediate 3-octaprenyl-4-hydroxybenzoate. The sequence is that of 4-hydroxybenzoate octaprenyltransferase from Xanthomonas oryzae pv. oryzae (strain MAFF 311018).